Reading from the N-terminus, the 161-residue chain is Alpha-crystallin A chain (161 aa).

The required for complex formation with BFSP1 and BFSP2 stretch occupies residues 1-51 (ALGPFYPSRXXXXXXXXXXXXXXXXXXXXXXXXXXXXQSLFRTVLDSGISE). Deamidated glutamine; partial is present on Q38. A sHSP domain is found at 40–150 (LFRTVLDSGI…SHSERAIPVS (111 aa)). N6-acetyllysine is present on K87. H88 is a binding site for Zn(2+). N89 is subject to Deamidated asparagine; partial. Zn(2+) contacts are provided by E90 and H95. The residue at position 110 (S110) is a Phosphoserine. N111 is subject to Deamidated asparagine; partial. An intrachain disulfide couples C119 to C130. Q135 is subject to Deamidated glutamine; partial. A disordered region spans residues 140–161 (ASHSERAIPVSREEKPSSAPSS). The span at 141-155 (SHSERAIPVSREEKP) shows a compositional bias: basic and acidic residues. Residue H142 coordinates Zn(2+). S150 is a glycosylation site (O-linked (GlcNAc) serine).

The protein belongs to the small heat shock protein (HSP20) family. As to quaternary structure, heteromer composed of three CRYAA and one CRYAB subunits. Inter-subunit bridging via zinc ions enhances stability, which is crucial as there is no protein turn over in the lens. Can also form homodimers and homotetramers (dimers of dimers) which serve as the building blocks of homooligomers. Within homooligomers, the zinc-binding motif is created from residues of 3 different molecules. His-88 and Glu-90 from one molecule are ligands of the zinc ion, and His-95 and His-142 residues from additional molecules complete the site with tetrahedral coordination geometry. Part of a complex required for lens intermediate filament formation composed of BFSP1, BFSP2 and CRYAA. Undergoes age-dependent proteolytical cleavage at the C-terminus.

The protein resides in the cytoplasm. The protein localises to the nucleus. In terms of biological role, contributes to the transparency and refractive index of the lens. In its oxidized form (absence of intramolecular disulfide bond), acts as a chaperone, preventing aggregation of various proteins under a wide range of stress conditions. Required for the correct formation of lens intermediate filaments as part of a complex composed of BFSP1, BFSP2 and CRYAA. The chain is Alpha-crystallin A chain (CRYAA) from Galegeeska rufescens (East African rufous sengi).